We begin with the raw amino-acid sequence, 465 residues long: 3-isopropylmalate dehydratase large subunit (465 aa).

[4Fe-4S] cluster contacts are provided by Cys347, Cys407, and Cys410.

This sequence belongs to the aconitase/IPM isomerase family. LeuC type 1 subfamily. Heterodimer of LeuC and LeuD. [4Fe-4S] cluster is required as a cofactor.

The catalysed reaction is (2R,3S)-3-isopropylmalate = (2S)-2-isopropylmalate. It functions in the pathway amino-acid biosynthesis; L-leucine biosynthesis; L-leucine from 3-methyl-2-oxobutanoate: step 2/4. Functionally, catalyzes the isomerization between 2-isopropylmalate and 3-isopropylmalate, via the formation of 2-isopropylmaleate. This chain is 3-isopropylmalate dehydratase large subunit, found in Tolumonas auensis (strain DSM 9187 / NBRC 110442 / TA 4).